Consider the following 357-residue polypeptide: Alanine racemase (357 aa).

The Proton acceptor; specific for D-alanine role is filled by Lys35. Lys35 carries the N6-(pyridoxal phosphate)lysine modification. Arg130 lines the substrate pocket. Tyr255 acts as the Proton acceptor; specific for L-alanine in catalysis. Met303 contacts substrate.

Belongs to the alanine racemase family. The cofactor is pyridoxal 5'-phosphate.

It catalyses the reaction L-alanine = D-alanine. Its pathway is amino-acid biosynthesis; D-alanine biosynthesis; D-alanine from L-alanine: step 1/1. In terms of biological role, catalyzes the interconversion of L-alanine and D-alanine. May also act on other amino acids. The polypeptide is Alanine racemase (alr) (Nitrosospira multiformis (strain ATCC 25196 / NCIMB 11849 / C 71)).